The following is a 460-amino-acid chain: Probable elastin-binding protein EbpS (460 aa).

Positions 1–40 (MSNNNFKDDFEKNRQSINPDEHQTELKEDDKTNENKKEAD) are enriched in basic and acidic residues. The disordered stretch occupies residues 1–277 (MSNNNFKDDF…NQYNDQSEGK (277 aa)). Over residues 41-57 (SQNSLSNNSNQQFPPRN) the composition is skewed to low complexity. The span at 74–128 (QQDDKHQKNSDAKTTEGSLDDRYDEAQLQQQHDKSQQQNKTEKQSQDNRMKDGKD) shows a compositional bias: basic and acidic residues. Low complexity predominate over residues 177–192 (ATGAGIAGAAGVAGAA). Residues 203–226 (DKQDSKHSNHENDEKSVKNDDQKQ) are compositionally biased toward basic and acidic residues. Residues 264 to 273 (SNQNNQYNDQ) show a composition bias toward low complexity. A helical transmembrane segment spans residues 285–305 (ILLPLIAAILILGAIAIFGGM). Positions 313-359 (SKSDDQKIANQSKKDSDKKDGAQSEDNKDKKSDSNKDKKSDSDKNAD) are enriched in basic and acidic residues. Positions 313–411 (SKSDDQKIAN…NQQATQGQQS (99 aa)) are disordered. Low complexity predominate over residues 364–411 (NSSSNPNATSTNNNDNVANNNSNYTNQNQQDNANQNSNNQQATQGQQS). Positions 410 to 458 (QSHTVYGQENLYRIAIQYYGEGTQANVDKIKRANGLSSNNIHNGQTLVI) constitute a LysM domain.

The protein resides in the cell membrane. The chain is Probable elastin-binding protein EbpS (ebpS) from Staphylococcus epidermidis (strain ATCC 35984 / DSM 28319 / BCRC 17069 / CCUG 31568 / BM 3577 / RP62A).